Consider the following 336-residue polypeptide: MLYPLARHFLFKLNPEQAHDLSIKYLPRLLGTPLDCFFRHSLPKRPVTVMGLSFANPVGLAAGLDKDGECIDAFGAMGFGFIEVGTVTPRPQSGNDKPRLFRVIPAEGIINRMGFNNKGVDHLVAQVKKAKYQGVIGINIGKNKDTPIEQGKDDYLICMDKVYDQAGYIAVNISSPNTPGLRSLQYGDALDELLAALKVRQQELAAQYKKYVPLAVKIAPDLTPDEINQVAASLIKNGIDGVIATNTTLERDMIYDMPHAAEAGGLSGRPLQHKSTEVIRQLAKALDGALPIIGVGGIDSAMAAREKLAAGASLVQIYSGFIYKGPDLVKEIVTHI.

Residues 62-66 (AGLDK) and T86 contribute to the FMN site. K66 contributes to the substrate binding site. Residue 111 to 115 (NRMGF) coordinates substrate. FMN-binding residues include N139 and N172. Position 172 (N172) interacts with substrate. The active-site Nucleophile is S175. Substrate is bound at residue N177. Positions 217 and 245 each coordinate FMN. Substrate is bound at residue 246–247 (NT). FMN contacts are provided by residues G268, G297, and 318 to 319 (YS).

The protein belongs to the dihydroorotate dehydrogenase family. Type 2 subfamily. Monomer. The cofactor is FMN.

It localises to the cell membrane. It carries out the reaction (S)-dihydroorotate + a quinone = orotate + a quinol. Its pathway is pyrimidine metabolism; UMP biosynthesis via de novo pathway; orotate from (S)-dihydroorotate (quinone route): step 1/1. Its function is as follows. Catalyzes the conversion of dihydroorotate to orotate with quinone as electron acceptor. This Aeromonas hydrophila subsp. hydrophila (strain ATCC 7966 / DSM 30187 / BCRC 13018 / CCUG 14551 / JCM 1027 / KCTC 2358 / NCIMB 9240 / NCTC 8049) protein is Dihydroorotate dehydrogenase (quinone).